The chain runs to 138 residues: ATP synthase epsilon chain (138 aa).

This sequence belongs to the ATPase epsilon chain family. F-type ATPases have 2 components, CF(1) - the catalytic core - and CF(0) - the membrane proton channel. CF(1) has five subunits: alpha(3), beta(3), gamma(1), delta(1), epsilon(1). CF(0) has three main subunits: a, b and c.

It is found in the cell membrane. Functionally, produces ATP from ADP in the presence of a proton gradient across the membrane. This Streptococcus equi subsp. zooepidemicus (strain H70) protein is ATP synthase epsilon chain.